The chain runs to 81 residues: UPF0180 protein ABC2430 (81 aa).

The protein belongs to the UPF0180 family.

In Shouchella clausii (strain KSM-K16) (Alkalihalobacillus clausii), this protein is UPF0180 protein ABC2430.